Reading from the N-terminus, the 192-residue chain is Peptidyl-tRNA hydrolase (192 aa).

Histidine 17 is a tRNA binding site. The active-site Proton acceptor is the histidine 22. The tRNA site is built by phenylalanine 68, asparagine 70, and asparagine 116.

It belongs to the PTH family. As to quaternary structure, monomer.

Its subcellular location is the cytoplasm. The catalysed reaction is an N-acyl-L-alpha-aminoacyl-tRNA + H2O = an N-acyl-L-amino acid + a tRNA + H(+). In terms of biological role, hydrolyzes ribosome-free peptidyl-tRNAs (with 1 or more amino acids incorporated), which drop off the ribosome during protein synthesis, or as a result of ribosome stalling. Its function is as follows. Catalyzes the release of premature peptidyl moieties from peptidyl-tRNA molecules trapped in stalled 50S ribosomal subunits, and thus maintains levels of free tRNAs and 50S ribosomes. This Stenotrophomonas maltophilia (strain R551-3) protein is Peptidyl-tRNA hydrolase.